The chain runs to 388 residues: MAAAVEKILGEQYYKDAMEQCHNYNARLCAERSVRLPFLDSQTRVAQSNCYIWMEKRHRGPGSAPGQLYTYPSRRWRKKRRAHPPEDPRLSFPSLKPDPEQMLKKEGVIPPDGSSLEALLRSDPIEKRIMPDSRDDDSLTEFPPLSRSARKRILEPDDFLDDLDDEDYEEDTPKKRGKGKAKGKGIGSARKKLDAAALDDRDKPYACDICGKRYKNRPGLSYHYAHSHLVDEEGAGAEDKEDSQPPTPIMHRPEEQKSKKGPDGIALPNNYCDFCLGDSKINKKTNQSEELVSCSDCGRSGHPSCLQFTAVMMAAVKTYRWQCIECKCCNICGTSENDDQLLFCDDCDRGYHMYCLVPPVAEPPEGSWSCHLCLDLLKDKASIYQNQS.

The interval 60-190 is disordered; it reads GPGSAPGQLY…AKGKGIGSAR (131 aa). 2 stretches are compositionally biased toward basic and acidic residues: residues 97-107 and 123-137; these read PDPEQMLKKEG and DPIE…RDDD. A compositionally biased stretch (acidic residues) spans 156–170; it reads PDDFLDDLDDEDYEE. A C2H2-type zinc finger spans residues 205–228; it reads YACDICGKRYKNRPGLSYHYAHSH. A disordered region spans residues 233–264; sequence EGAGAEDKEDSQPPTPIMHRPEEQKSKKGPDG. The segment covering 251 to 262 has biased composition (basic and acidic residues); that stretch reads HRPEEQKSKKGP. 2 consecutive PHD-type zinc fingers follow at residues 269–329 and 326–376; these read NNYC…CKCC and CKCC…CLDL.

Belongs to the requiem/DPF family.

The protein localises to the cytoplasm. It is found in the nucleus. May be a transcription factor required for the apoptosis response following survival factor withdrawal from myeloid cells. Might also have a role in the development and maturation of lymphoid cells. The protein is Zinc finger protein ubi-d4 A (req-a) of Xenopus laevis (African clawed frog).